The sequence spans 662 residues: F-box/WD repeat-containing protein pof10 (662 aa).

Over residues 1 to 16 (MKSEPTSLDFTSSNLR) the composition is skewed to polar residues. The interval 1–27 (MKSEPTSLDFTSSNLRRMNRDHSSNNT) is disordered. In terms of domain architecture, F-box spans 28-74 (NRTVLNLPKEILIIIFSFLDPRSLLSAQCTCKYWKKLLSDDLSWRTA). WD repeat units follow at residues 215–260 (SHAD…SLQS), 263–302 (FRSS…GYAR), and 429–468 (TAYS…FLKK). In terms of domain architecture, UIM 1 spans 581–600 (SEEEIIAYVTMLSQEEEAKR). Residues 617–645 (ENDEQATSSLNALSSNHEPPQEQANVAEL) form a disordered region. A compositionally biased stretch (polar residues) spans 621–640 (QATSSLNALSSNHEPPQEQA). A UIM 2 domain is found at 646-662 (NEQEQIELAMRLSLMEM).

In terms of assembly, part of a SCF (SKP1-cullin-F-box) protein ligase complex. Interacts with skp1.

The protein localises to the cytoplasm. In terms of biological role, probably recognizes and binds to some phosphorylated proteins and promotes their ubiquitination and degradation. The polypeptide is F-box/WD repeat-containing protein pof10 (pof10) (Schizosaccharomyces pombe (strain 972 / ATCC 24843) (Fission yeast)).